The primary structure comprises 309 residues: Dioxygenase af480 (309 aa).

Positions 153, 155, and 228 each coordinate Fe cation.

This sequence belongs to the PhyH family. Requires Fe cation as cofactor.

It carries out the reaction 5-dehydro-6-demethoxyfumagillol + 2-oxoglutarate + O2 = 5-dehydro-6-demethoxy-6-hydroxyfumagillol + succinate + CO2. It participates in secondary metabolite biosynthesis; terpenoid biosynthesis. Its function is as follows. Dioxygenase; part of the gene cluster that mediates the biosynthesis of fumagillin, a meroterpenoid that has numerous biological activities including irreversible inhibition of human type 2 methionine aminopeptidase (METAP2). Within the pathway, the dioxygenase af480 acts as a 5-dehydro-6-demethoxyfumagillol dioxygenase that hydroylates 5-keto-demethoxyfumagillol at position C-6. The pathway begins with the conversion of farnesyl pyrophosphate (FPP) to beta-trans-bergamotene by the membrane-bound beta-trans-bergamotene synthase af520. The multifunctional cytochrome P450 monooxygenase af510 then converts beta-trans-bergamotene into 5-keto-demethoxyfumagillol via several oxydation steps. 5-keto-demethoxyfumagillol is then subjected to successive C-6 hydroxylation and O-methylation by the dioxygenase af480 and O-methyltransferase af390-400, respectively, to yield 5-keto-fumagillol, which is then stereoselectively reduced by the keto-reductase af490 to 5R-hydroxy-seco-sesquiterpene. The next step is the polyketide transferase af380-catalyzed transfer of a dodecapentaenoyl group synthesized by the polyketide synthase af370 onto 5R-hydroxy-seco-sesquiterpene which leads to the production of prefumagillin. Finally, oxidative cleavage by the monooxygenase af470 converts prefumagillin to fumagillin. This Aspergillus fumigatus (strain ATCC MYA-4609 / CBS 101355 / FGSC A1100 / Af293) (Neosartorya fumigata) protein is Dioxygenase af480.